A 204-amino-acid chain; its full sequence is Holliday junction branch migration complex subunit RuvA (204 aa).

The segment at 1–64 (MIGRLQGKLI…EDAHLLFGFS (64 aa)) is domain I. A domain II region spans residues 65–143 (TKTDRTLFRE…GLRQPDFFVE (79 aa)). The segment at 144-155 (SKHITVPDIVSA) is flexible linker. Residues 156–204 (EKETPNDEAVAALVALGYKPPEAAKMVKKVANGDLTSEQLIREALKAAL) form a domain III region.

This sequence belongs to the RuvA family. As to quaternary structure, homotetramer. Forms an RuvA(8)-RuvB(12)-Holliday junction (HJ) complex. HJ DNA is sandwiched between 2 RuvA tetramers; dsDNA enters through RuvA and exits via RuvB. An RuvB hexamer assembles on each DNA strand where it exits the tetramer. Each RuvB hexamer is contacted by two RuvA subunits (via domain III) on 2 adjacent RuvB subunits; this complex drives branch migration. In the full resolvosome a probable DNA-RuvA(4)-RuvB(12)-RuvC(2) complex forms which resolves the HJ.

The protein localises to the cytoplasm. Its function is as follows. The RuvA-RuvB-RuvC complex processes Holliday junction (HJ) DNA during genetic recombination and DNA repair, while the RuvA-RuvB complex plays an important role in the rescue of blocked DNA replication forks via replication fork reversal (RFR). RuvA specifically binds to HJ cruciform DNA, conferring on it an open structure. The RuvB hexamer acts as an ATP-dependent pump, pulling dsDNA into and through the RuvAB complex. HJ branch migration allows RuvC to scan DNA until it finds its consensus sequence, where it cleaves and resolves the cruciform DNA. This chain is Holliday junction branch migration complex subunit RuvA, found in Actinobacillus succinogenes (strain ATCC 55618 / DSM 22257 / CCUG 43843 / 130Z).